The following is a 563-amino-acid chain: Methylcrotonoyl-CoA carboxylase beta chain, mitochondrial (563 aa).

A mitochondrion-targeting transit peptide spans 1 to 22; sequence MWGALRSVLRPCSRASVPRQRA. The CoA carboxyltransferase N-terminal domain maps to 49 to 306; it reads MKALVNQLHE…QKKLDVTVEP (258 aa). The tract at residues 49 to 555 is carboxyltransferase; the sequence is MKALVNQLHE…SAALNAPIQR (507 aa). K70 bears the N6-acetyllysine; alternate mark. K70 is modified (N6-succinyllysine; alternate). At K141 the chain carries N6-succinyllysine. The CoA carboxyltransferase C-terminal domain occupies 309–555; it reads EPLFPADELY…SAALNAPIQR (247 aa). Residues 343–372 form an acyl-CoA binding region; the sequence is RFNEFKALYGDTLVTGFARIFGYPVGIIGN. K433 is subject to N6-succinyllysine. K495 carries the N6-acetyllysine; alternate modification. An N6-succinyllysine; alternate modification is found at K495. N6-acetyllysine is present on K511.

This sequence belongs to the AccD/PCCB family. In terms of assembly, probably a dodecamer composed of six biotin-containing alpha subunits (MCCC1) and six beta (MCCC2) subunits.

The protein localises to the mitochondrion matrix. It catalyses the reaction 3-methylbut-2-enoyl-CoA + hydrogencarbonate + ATP = 3-methyl-(2E)-glutaconyl-CoA + ADP + phosphate + H(+). The protein operates within amino-acid degradation; L-leucine degradation; (S)-3-hydroxy-3-methylglutaryl-CoA from 3-isovaleryl-CoA: step 2/3. Its function is as follows. Carboxyltransferase subunit of the 3-methylcrotonyl-CoA carboxylase, an enzyme that catalyzes the conversion of 3-methylcrotonyl-CoA to 3-methylglutaconyl-CoA, a critical step for leucine and isovaleric acid catabolism. This is Methylcrotonoyl-CoA carboxylase beta chain, mitochondrial (Mccc2) from Rattus norvegicus (Rat).